The primary structure comprises 473 residues: Kremen protein 1 (473 aa).

A signal peptide spans Met-1 to Ala-19. Residues Arg-21–Thr-392 are Extracellular-facing. The 84-residue stretch at Glu-31 to Cys-114 folds into the Kringle domain. Disulfide bonds link Cys-32-Cys-114, Cys-55-Cys-95, Cys-84-Cys-109, Cys-122-Cys-186, Cys-147-Cys-167, Cys-151-Cys-169, Cys-190-Cys-198, and Cys-214-Cys-240. N-linked (GlcNAc...) asparagine glycans are attached at residues Asn-45 and Asn-59. The region spanning Met-116–Leu-210 is the WSC domain. Residues Cys-214–Val-321 form the CUB domain. Asn-217, Asn-293, Asn-333, and Asn-345 each carry an N-linked (GlcNAc...) asparagine glycan. A helical membrane pass occupies residues Val-393 to Leu-413. At His-414 to Asp-473 the chain is on the cytoplasmic side. Residues His-414–Asp-473 are essential for apoptotic activity.

Forms a ternary complex with DKK1 and LRP6. Interacts with LRP6 in a DKK1-dependent manner. Interacts with DKK1 and RSPO1 (via FU repeats).

Its subcellular location is the cell membrane. Receptor for Dickkopf proteins. Cooperates with DKK1/2 to inhibit Wnt/beta-catenin signaling by promoting the endocytosis of Wnt receptors LRP5 and LRP6. In the absence of DKK1, potentiates Wnt-beta-catenin signaling by maintaining LRP5 or LRP6 at the cell membrane. Can trigger apoptosis in a Wnt-independent manner and this apoptotic activity is inhibited upon binding of the ligand DKK1. Plays a role in limb development; attenuates Wnt signaling in the developing limb to allow normal limb patterning and can also negatively regulate bone formation. Modulates cell fate decisions in the developing cochlea with an inhibitory role in hair cell fate specification. The polypeptide is Kremen protein 1 (KREMEN1) (Homo sapiens (Human)).